The following is a 327-amino-acid chain: GTP 3',8-cyclase (327 aa).

A Radical SAM core domain is found at 8–232 (AFARKFYYLR…LQRSRSDGPA (225 aa)). R17 provides a ligand contact to GTP. [4Fe-4S] cluster is bound by residues C24 and C28. Y30 is an S-adenosyl-L-methionine binding site. C31 contacts [4Fe-4S] cluster. R66 is a GTP binding site. Residue G70 participates in S-adenosyl-L-methionine binding. T97 contributes to the GTP binding site. S-adenosyl-L-methionine is bound at residue S121. GTP is bound at residue K158. M192 lines the S-adenosyl-L-methionine pocket. [4Fe-4S] cluster is bound by residues C255 and C258. 260–262 (RLR) contacts GTP. C272 is a binding site for [4Fe-4S] cluster.

The protein belongs to the radical SAM superfamily. MoaA family. As to quaternary structure, monomer and homodimer. The cofactor is [4Fe-4S] cluster.

The enzyme catalyses GTP + AH2 + S-adenosyl-L-methionine = (8S)-3',8-cyclo-7,8-dihydroguanosine 5'-triphosphate + 5'-deoxyadenosine + L-methionine + A + H(+). Its pathway is cofactor biosynthesis; molybdopterin biosynthesis. Its function is as follows. Catalyzes the cyclization of GTP to (8S)-3',8-cyclo-7,8-dihydroguanosine 5'-triphosphate. The polypeptide is GTP 3',8-cyclase (Photorhabdus laumondii subsp. laumondii (strain DSM 15139 / CIP 105565 / TT01) (Photorhabdus luminescens subsp. laumondii)).